Consider the following 123-residue polypeptide: 13 kDa major membrane protein (123 aa).

The protein localises to the cell membrane. The sequence is that of 13 kDa major membrane protein from Francisella tularensis subsp. holarctica (strain LVS).